The following is a 206-amino-acid chain: Large ribosomal subunit protein uL13w (206 aa).

Belongs to the universal ribosomal protein uL13 family.

In Arabidopsis thaliana (Mouse-ear cress), this protein is Large ribosomal subunit protein uL13w (RPL13AD).